A 638-amino-acid chain; its full sequence is Cytoplasmic dynein 1 intermediate chain 2 (638 aa).

Basic and acidic residues-rich tracts occupy residues 1-13 (MSDK…ELER) and 20-43 (QIRE…KKEA). Disordered stretches follow at residues 1 to 135 (MSDK…GRGP) and 154 to 209 (VTYT…HELT). Residue Ser2 is modified to N-acetylserine. Position 51 is a diphosphoserine (Ser51). 2 positions are modified to phosphoserine: Ser51 and Ser90. Residues 88–97 (PSSKSVSTPS) show a composition bias toward low complexity. At Thr95 the chain carries Phosphothreonine. Residues Ser97, Ser101, and Ser104 each carry the phosphoserine modification. Positions 133 to 165 (RGPIKLGMAKITQVDFPPREIVTYTKETQTPVT) are interaction with DYNLT1. Residues 190 to 209 (EKILKKDEENDSKAPPHELT) are compositionally biased toward basic and acidic residues. 6 WD repeats span residues 277 to 326 (SKHR…TTPE), 330 to 370 (HCQS…RTPV), 379 to 420 (AHTH…HPQD), 429 to 469 (SKAV…AGIS), 474 to 519 (GHQG…PLYS), and 568 to 607 (EGNP…AVPR).

It belongs to the dynein intermediate chain family. In terms of assembly, homodimer. The cytoplasmic dynein 1 complex consists of two catalytic heavy chains (HCs) and a number of non-catalytic subunits presented by intermediate chains (ICs), light intermediate chains (LICs) and light chains (LCs); the composition seems to vary in respect to the IC, LIC and LC composition. The heavy chain homodimer serves as a scaffold for the probable homodimeric assembly of the respective non-catalytic subunits. The ICs and LICs bind directly to the HC dimer and the LCs assemble on the IC dimer. Interacts with DYNLT3. Interacts with DYNLT1. Interacts (dephosphorylated at Ser-90) with DCTN1. Interacts with BICD2. Interacts with SPEF2. Interacts with CFAP61. Post-translationally, the phosphorylation status of Ser-90 appears to be involved in dynactin-dependent target binding. In terms of processing, pyrophosphorylation by 5-diphosphoinositol pentakisphosphate (5-IP7) promotes interaction with DCTN1. Serine pyrophosphorylation is achieved by Mg(2+)-dependent, but enzyme independent transfer of a beta-phosphate from a inositol pyrophosphate to a pre-phosphorylated serine residue. As to expression, skeletal muscle, testis, kidney, brain, heart and spleen.

The protein resides in the cytoplasm. Its subcellular location is the cytoskeleton. In terms of biological role, acts as one of several non-catalytic accessory components of the cytoplasmic dynein 1 complex that are thought to be involved in linking dynein to cargos and to adapter proteins that regulate dynein function. Cytoplasmic dynein 1 acts as a motor for the intracellular retrograde motility of vesicles and organelles along microtubules. The intermediate chains mediate the binding of dynein to dynactin via its 150 kDa component (p150-glued) DCTN1. Involved in membrane-transport, such as Golgi apparatus, late endosomes and lysosomes. This chain is Cytoplasmic dynein 1 intermediate chain 2 (Dync1i2), found in Rattus norvegicus (Rat).